The primary structure comprises 956 residues: Lon protease homolog, mitochondrial 1 (956 aa).

Disordered stretches follow at residues 37–57 and 83–123; these read NNNNNNNNNNNNNNNNNNNNN and KKKG…GNEK. The span at 91 to 123 shows a compositional bias: basic and acidic residues; sequence NNDDNDNEKNEKNEKKVKNEKKEKNEKNDGNEK. The Lon N-terminal domain occupies 159–357; that stretch reads VVIYPSNSVN…MLYHMILNEQ (199 aa). 511–518 serves as a coordination point for ATP; sequence GPPGTGKT. The 199-residue stretch at 747-945 folds into the Lon proteolytic domain; the sequence is VTPIGVVNGL…KDVFEVAFPN (199 aa). A compositionally biased stretch (low complexity) spans 777–795; sequence KPLSSLPPSQQQQNQLEPS. The tract at residues 777–800 is disordered; that stretch reads KPLSSLPPSQQQQNQLEPSIKTTG. Residues Ser-851 and Lys-894 contribute to the active site.

The protein belongs to the peptidase S16 family. In terms of assembly, homohexamer or homoheptamer. Organized in a ring with a central cavity.

The protein resides in the mitochondrion matrix. It catalyses the reaction Hydrolysis of proteins in presence of ATP.. In terms of biological role, ATP-dependent serine protease that mediates the selective degradation of misfolded, unassembled or oxidatively damaged polypeptides as well as certain short-lived regulatory proteins in the mitochondrial matrix. May also have a chaperone function in the assembly of inner membrane protein complexes. Participates in the regulation of mitochondrial gene expression and in the maintenance of the integrity of the mitochondrial genome. Binds to mitochondrial DNA in a site-specific manner. The polypeptide is Lon protease homolog, mitochondrial 1 (Dictyostelium discoideum (Social amoeba)).